Here is a 308-residue protein sequence, read N- to C-terminus: Transaldolase (308 aa).

The active-site Schiff-base intermediate with substrate is the K125.

The protein belongs to the transaldolase family. Type 1 subfamily. Homodimer.

Its subcellular location is the cytoplasm. It catalyses the reaction D-sedoheptulose 7-phosphate + D-glyceraldehyde 3-phosphate = D-erythrose 4-phosphate + beta-D-fructose 6-phosphate. It participates in carbohydrate degradation; pentose phosphate pathway; D-glyceraldehyde 3-phosphate and beta-D-fructose 6-phosphate from D-ribose 5-phosphate and D-xylulose 5-phosphate (non-oxidative stage): step 2/3. In terms of biological role, transaldolase is important for the balance of metabolites in the pentose-phosphate pathway. This chain is Transaldolase, found in Stutzerimonas stutzeri (strain A1501) (Pseudomonas stutzeri).